A 156-amino-acid polypeptide reads, in one-letter code: Small ribosomal subunit protein uS7 (156 aa).

The protein belongs to the universal ribosomal protein uS7 family. Part of the 30S ribosomal subunit. Contacts proteins S9 and S11.

Its function is as follows. One of the primary rRNA binding proteins, it binds directly to 16S rRNA where it nucleates assembly of the head domain of the 30S subunit. Is located at the subunit interface close to the decoding center, probably blocks exit of the E-site tRNA. This Methylorubrum populi (strain ATCC BAA-705 / NCIMB 13946 / BJ001) (Methylobacterium populi) protein is Small ribosomal subunit protein uS7.